A 370-amino-acid polypeptide reads, in one-letter code: Flagellar P-ring protein (370 aa).

The signal sequence occupies residues 1 to 24 (MTLSKWILSFGLSVCLIVSHPVSA).

This sequence belongs to the FlgI family. As to quaternary structure, the basal body constitutes a major portion of the flagellar organelle and consists of four rings (L,P,S, and M) mounted on a central rod.

It is found in the periplasm. The protein resides in the bacterial flagellum basal body. Functionally, assembles around the rod to form the L-ring and probably protects the motor/basal body from shearing forces during rotation. This chain is Flagellar P-ring protein, found in Nitrosomonas europaea (strain ATCC 19718 / CIP 103999 / KCTC 2705 / NBRC 14298).